A 318-amino-acid polypeptide reads, in one-letter code: NAD(P)H-dependent D-xylose reductase (318 aa).

Residue Y48 is the Proton donor of the active site. Residue H110 participates in substrate binding. Residues 165 to 166, 214 to 223, and 270 to 280 contribute to the NAD(+) site; these read SN, SSFGPQSFVE, and KSNTVPRLLEN.

The protein belongs to the aldo/keto reductase family.

It carries out the reaction xylitol + NAD(+) = D-xylose + NADH + H(+). The enzyme catalyses xylitol + NADP(+) = D-xylose + NADPH + H(+). It participates in carbohydrate metabolism; D-xylose degradation. With respect to regulation, NADP(+) is a potent inhibitor of both the NADPH- and NADH-linked xylose reduction, whereas NAD(+) showS strong inhibition only with the NADH-linked reaction. Reduces D-xylose into xylitol. Has a preference for NADPH, but can also utilize NADH as cosubstrate. The protein is NAD(P)H-dependent D-xylose reductase (XYL1) of Scheffersomyces stipitis (strain ATCC 58785 / CBS 6054 / NBRC 10063 / NRRL Y-11545) (Yeast).